The chain runs to 139 residues: Lysozyme (139 aa).

Residues Met1 to Ala19 form the signal peptide. The C-type lysozyme domain maps to Lys20 to Cys139. Intrachain disulfides connect Cys25-Cys139, Cys46-Cys129, Cys81-Cys95, and Cys91-Cys109. Catalysis depends on residues Glu51 and Asp69.

It belongs to the glycosyl hydrolase 22 family.

The catalysed reaction is Hydrolysis of (1-&gt;4)-beta-linkages between N-acetylmuramic acid and N-acetyl-D-glucosamine residues in a peptidoglycan and between N-acetyl-D-glucosamine residues in chitodextrins.. Functionally, lysozymes have primarily a bacteriolytic function; those in tissues and body fluids are associated with the monocyte-macrophage system and enhance the activity of immunoagents. This is Lysozyme from Hyalophora cecropia (Cecropia moth).